We begin with the raw amino-acid sequence, 245 residues long: Thiopurine S-methyltransferase (245 aa).

29–40 (WREKWVDGKIGF) lines the S-adenosyl-L-methionine pocket. A substrate-binding site is contributed by F40. N6-acetyllysine is present on K58. Positions 69, 90, and 152 each coordinate S-adenosyl-L-methionine.

It belongs to the class I-like SAM-binding methyltransferase superfamily. TPMT family. In terms of assembly, monomer.

It is found in the cytoplasm. It catalyses the reaction S-adenosyl-L-methionine + a thiopurine = S-adenosyl-L-homocysteine + a thiopurine S-methylether.. In Panthera leo (Lion), this protein is Thiopurine S-methyltransferase (TPMT).